Here is a 1466-residue protein sequence, read N- to C-terminus: Adhesion G protein-coupled receptor L1 (1466 aa).

The first 28 residues, 1 to 28 (MARLAAALWSLCVTTVLVTSATQGLSRA), serve as a signal peptide directing secretion. The Extracellular segment spans residues 29–852 (GLPFGLMRRE…EIYQGRINEL (824 aa)). An SUEL-type lectin domain is found at 40–129 (ACEGYPIELR…KYLEVQYDCV (90 aa)). Intrachain disulfides connect Cys-41–Cys-71, Cys-50–Cys-128, Cys-83–Cys-115, Cys-96–Cys-102, and Cys-135–Cys-317. An alpha-L-rhamnose-binding site is contributed by Glu-42. The N-linked (GlcNAc...) asparagine glycan is linked to Asn-98. Residue 117-120 (GTYK) participates in alpha-L-rhamnose binding. Positions 134–393 (VCPGTLQKVL…VVRYSLEFGP (260 aa)) constitute an Olfactomedin-like domain. Residues 395-463 (DPSAGPATSP…APAPSTRRPP (69 aa)) form a disordered region. Residues 400-436 (PATSPPLSTTTTARPTPLTSTASPAATTPLRRAPLTT) are compositionally biased toward low complexity. A compositionally biased stretch (pro residues) spans 448-463 (DLPPATAPAPSTRRPP). 2 disulfides stabilise this stretch: Cys-475/Cys-510 and Cys-498/Cys-527. Residues Asn-526, Asn-635, Asn-736, Asn-795, Asn-800, and Asn-821 are each glycosylated (N-linked (GlcNAc...) asparagine). One can recognise a GAIN-B domain in the interval 664–845 (PARFLAAKQN…AVLMAHREIY (182 aa)). 2 disulfide bridges follow: Cys-796/Cys-827 and Cys-815/Cys-829. The tract at residues 796-845 (CSFWNYSERSMLGYWSTQGCRLVESNKTHTTCACSHLTNFAVLMAHREIY) is GPS. Residues 853–873 (LLSVITWVGIVISLVCLAICI) traverse the membrane as a helical segment. Topologically, residues 874 to 887 (STFCFLRGLQTDRN) are cytoplasmic. A helical transmembrane segment spans residues 888–908 (TIHKNLCINLFLAELLFLVGI). Residues 909–914 (DKTQYE) are Extracellular-facing. A helical transmembrane segment spans residues 915–935 (VACPIFAGLLHYFFLAAFSWL). Residues 936–958 (CLEGVHLYLLLVEVFESEYSRTK) are Cytoplasmic-facing. A helical transmembrane segment spans residues 959 to 979 (YYYLGGYCFPALVVGIAAAID). The Extracellular portion of the chain corresponds to 980-996 (YRSYGTEKACWLRVDNY). A helical transmembrane segment spans residues 997 to 1017 (FIWSFIGPVSFVIVVNLVFLM). Residues 1018-1044 (VTLHKMIRSSSVLKPDSSRLDNIKSWA) are Cytoplasmic-facing. A helical membrane pass occupies residues 1045–1065 (LGAIALLFLLGLTWAFGLLFI). Residues 1066–1069 (NKES) are Extracellular-facing. A helical transmembrane segment spans residues 1070 to 1090 (VVMAYLFTTFNAFQGVFIFVF). Over 1091–1466 (HCALQKKVHK…DGQMQLVTSL (376 aa)) the chain is Cytoplasmic. Position 1188 is an omega-N-methylarginine (Arg-1188). Ser-1214 carries the phosphoserine modification. 4 disordered regions span residues 1242–1267 (FNNS…RGRN), 1288–1319 (RGAS…GPGS), 1352–1421 (ESES…SRPP), and 1443–1466 (YLAA…VTSL). The span at 1296–1307 (GPPPEPPVPPVP) shows a compositional bias: pro residues. Ser-1319 carries the post-translational modification Phosphoserine. The span at 1400 to 1412 (ALPPPPPAPPGPP) shows a compositional bias: pro residues. Phosphoserine is present on residues Ser-1448 and Ser-1465.

The protein belongs to the G-protein coupled receptor 2 family. Adhesion G-protein coupled receptor (ADGR) subfamily. Forms a heterodimer, consisting of a large extracellular region (p120) non-covalently linked to a seven-transmembrane moiety (p85). Interacts with syntaxin and with proteins of the SHANK family via the PDZ domain. Interacts (via extracellular domain) with FLRT1, FLRT2 and FLRT3 (via extracellular domain). Post-translationally, autoproteolytically cleaved into 2 subunits, an extracellular subunit and a seven-transmembrane subunit. This proteolytic processing takes place early in the biosynthetic pathway, either in the endoplasmic reticulum or in the early compartment of the Golgi apparatus.

The protein localises to the cell membrane. It is found in the cell projection. It localises to the axon. Its subcellular location is the growth cone. The protein resides in the synapse. The protein localises to the presynaptic cell membrane. It is found in the synaptosome. Its function is as follows. Calcium-independent receptor of high affinity for alpha-latrotoxin, an excitatory neurotoxin present in black widow spider venom which triggers massive exocytosis from neurons and neuroendocrine cells. Receptor for TENM2 that mediates heterophilic synaptic cell-cell contact and postsynaptic specialization. Receptor probably implicated in the regulation of exocytosis. This Mus musculus (Mouse) protein is Adhesion G protein-coupled receptor L1.